Here is a 228-residue protein sequence, read N- to C-terminus: Extracellular protease inhibitor 10 (228 aa).

A signal peptide spans 1-22 (MKSAFTLSLALVAVTATISAAA). Kazal-like domains are found at residues 23 to 72 (DDNC…ECAS), 90 to 127 (TSGT…AKCK), and 156 to 208 (GYQG…EGTL). N25 carries N-linked (GlcNAc...) asparagine glycosylation. Intrachain disulfides connect C26–C56, C30–C49, and C38–C70. A disordered region spans residues 69 to 92 (ECASTPASSATPSPVTSSTGSTSG). A compositionally biased stretch (low complexity) spans 71–92 (ASTPASSATPSPVTSSTGSTSG). Cystine bridges form between C96/C126, C100/C119, C162/C193, and C167/C186. N199 is a glycosylation site (N-linked (GlcNAc...) asparagine).

Interacts with host subtilisin-like protease P69B.

Its subcellular location is the secreted. Secreted effector that interacts with and inhibits the pathogenesis-related P69B subtilisin-like serine protease of host tomato. Inhibition of host proteases by a pathogen extracellular protease inhibitor forms a specific type of defense-counterdefense mechanism between plants and microbial pathogens. In Phytophthora infestans (strain T30-4) (Potato late blight agent), this protein is Extracellular protease inhibitor 10.